Reading from the N-terminus, the 212-residue chain is MGIGVIGTKVGMTRVFNEDGVSTPVTVVEVSPNRITQIKNNETDGYDAIQVTFGSKHAGRVSKPEAGHYAKAGVEAGQGLWEFRLDDVSEVEGLEPGSEITVEKFNDVAVVDVSGTTKGKGFQGGVKRHNFKMQDATHGNSVSHRAPGSIGQNQTPGRVFKGKKMAGHMGNVKQTTLNLELVKVDVENSLLLIKGALPGAKGSTVIVRKAIK.

Glutamine 154 bears the N5-methylglutamine mark.

This sequence belongs to the universal ribosomal protein uL3 family. In terms of assembly, part of the 50S ribosomal subunit. Forms a cluster with proteins L14 and L19. Post-translationally, methylated by PrmB.

In terms of biological role, one of the primary rRNA binding proteins, it binds directly near the 3'-end of the 23S rRNA, where it nucleates assembly of the 50S subunit. The chain is Large ribosomal subunit protein uL3 from Hydrogenovibrio crunogenus (strain DSM 25203 / XCL-2) (Thiomicrospira crunogena).